The chain runs to 284 residues: Pantothenate synthetase (284 aa).

30-37 (MGNLHEGH) lines the ATP pocket. The active-site Proton donor is histidine 37. Glutamine 61 contributes to the (R)-pantoate binding site. Glutamine 61 contributes to the beta-alanine binding site. Residue 149 to 152 (GEKD) participates in ATP binding. Glutamine 155 contributes to the (R)-pantoate binding site. ATP is bound by residues valine 178 and 186-189 (LSSR).

This sequence belongs to the pantothenate synthetase family. As to quaternary structure, homodimer.

It localises to the cytoplasm. It carries out the reaction (R)-pantoate + beta-alanine + ATP = (R)-pantothenate + AMP + diphosphate + H(+). It functions in the pathway cofactor biosynthesis; (R)-pantothenate biosynthesis; (R)-pantothenate from (R)-pantoate and beta-alanine: step 1/1. Its function is as follows. Catalyzes the condensation of pantoate with beta-alanine in an ATP-dependent reaction via a pantoyl-adenylate intermediate. This chain is Pantothenate synthetase, found in Sodalis glossinidius (strain morsitans).